A 165-amino-acid chain; its full sequence is Type IV major pilin protein PilE1 (165 aa).

A propeptide spans 1-7 (MNTLQKG) (leader sequence). F8 bears the N-methylphenylalanine mark. Residues 8–28 (FTLIELMIVIAIVGILAAVAL) form a helical membrane-spanning segment. Residue S70 is glycosylated (O-linked (DADDGlc) serine). O-(2-aminoethylphosphoryl)serine; alternate is present on S75. S75 carries the O-(2-cholinephosphoryl)serine; alternate modification. Residue S75 is modified to Phosphoserine; alternate. S101 is subject to O-(sn-1-glycerophosphoryl)serine; partial. Residues C128 and C158 are joined by a disulfide bond. The span at 137-153 (DDTVADAKDGKEIDTKH) shows a compositional bias: basic and acidic residues. Residues 137–165 (DDTVADAKDGKEIDTKHLPSTCRDNFDAK) form a disordered region.

The protein belongs to the N-Me-Phe pilin family. In terms of assembly, the pili are polar flexible filaments of about 5.4 nanometers diameter and 2.5 micrometers average length; they consist of only a single polypeptide chain arranged in a helical configuration of five subunits per turn in the assembled pilus. The O-linked glycan identified as Gal-GlcNAc disaccharide in PubMed:7477282 and PubMed:10048019 is now identified as either a hexosyl-diacetamidotrideoxyhexoside (DATDHex) by mass spectrometry in PubMed:15249686, or alpha-D-galactopyranosyl-(1-&gt;3)-2,4-diacetamido-2,4-dideoxy-beta-D-glucopyranoside (DADDGlc) by X-ray diffraction in PubMed:16949362. It is not clear whether there is a chemical difference in the glycosylation of the two derivatives of strain MS11 used in these experiments, or not. Post-translationally, in some MS11 derivative strains, Ser-75 is modified to O-(2-aminoethylphosphoryl)serine, and in some other derivatives that can be secondarily modified to O-(2-cholinephosphoryl)serine by N-methylation.

The protein resides in the fimbrium. It is found in the membrane. Functionally, major component of the type IV pilus (T4P) that plays a role in cellular adherence, microcolony formation, resistance to neutrophil mediated killing, twitching motility as well as transformation. Mediates the attachment and the formation of bacterial microcolonies on host epithelial cells. Mechanistically, pili retractation induces host NF-kappa-B activation in infected cells, which is temporally associated with the formation of gonococcal microcolonies. The protein is Type IV major pilin protein PilE1 (pilE1) of Neisseria gonorrhoeae.